Reading from the N-terminus, the 120-residue chain is Large ribosomal subunit protein uL18 (120 aa).

Belongs to the universal ribosomal protein uL18 family. As to quaternary structure, part of the 50S ribosomal subunit; part of the 5S rRNA/L5/L18/L25 subcomplex. Contacts the 5S and 23S rRNAs.

Functionally, this is one of the proteins that bind and probably mediate the attachment of the 5S RNA into the large ribosomal subunit, where it forms part of the central protuberance. The protein is Large ribosomal subunit protein uL18 of Acidiphilium cryptum (strain JF-5).